The sequence spans 252 residues: Chitooligosaccharide deacetylase (252 aa).

Histidine 61 and histidine 125 together coordinate Mg(2+).

The protein belongs to the YdjC deacetylase family. ChbG subfamily. Homodimer. Requires Mg(2+) as cofactor.

The protein localises to the cytoplasm. The catalysed reaction is N,N'-diacetylchitobiose + H2O = N-acetyl-beta-D-glucosaminyl-(1-&gt;4)-D-glucosamine + acetate. It catalyses the reaction diacetylchitobiose-6'-phosphate + H2O = N'-monoacetylchitobiose-6'-phosphate + acetate. It participates in glycan degradation; chitin degradation. Involved in the degradation of chitin. ChbG is essential for growth on the acetylated chitooligosaccharides chitobiose and chitotriose but is dispensable for growth on cellobiose and chitosan dimer, the deacetylated form of chitobiose. Deacetylation of chitobiose-6-P and chitotriose-6-P is necessary for both the activation of the chb promoter by the regulatory protein ChbR and the hydrolysis of phosphorylated beta-glucosides by the phospho-beta-glucosidase ChbF. Catalyzes the removal of only one acetyl group from chitobiose-6-P to yield monoacetylchitobiose-6-P, the inducer of ChbR and the substrate of ChbF. This is Chitooligosaccharide deacetylase from Salmonella paratyphi A (strain ATCC 9150 / SARB42).